A 316-amino-acid polypeptide reads, in one-letter code: MDTIKIFNHGEFDTIRNELVNLLKVVKWNTINSNVTVSSTDTIDISDCIREILYKQFKNVRNIEVSSDISFIKYNRFNDTTITDDNMGYYLVIYLNRTKSLKTLIYPTLETVISSSDDIMFSKSLNFRFENTKREYKLVMCSISLIYKPSICRIQYDNNKYIDISDSQEGNNLCYCVITMDPHHLIDLETMCVLVDKSGKCLLVNEFYIRFRKNHIYNSFVDICMDHIFELPNTKELFTLCNDDGRNIAWDNDKLESGNNTWIPKTDDEYMFLSKLMNIAKFNNTKFDYYVLVGDTDPCTVFTFKVTKYYININYE.

The protein belongs to the poxviridae OPG031 family.

It localises to the host cytoplasm. It is found in the host nucleus. In terms of biological role, plays a role in the inhibition of host NF-kappa-B activation. Mechanistically, blocks the subunit p65/RELA translocation into the host nucleus. This is protein OPG031 (OPG031) from Monkeypox virus.